We begin with the raw amino-acid sequence, 415 residues long: MHLLCFLSLACSLLAAALIPGPREAPATVAAFESGLGFSEAEPDGGEVKGFEGKDLEEQLRSVSSVDELMSVLYPDYWKMYKCQLRKGGWQQPSLNMRTGDTVKLAAAHYNTEILKSIDNEWRKTQCMPREVCIDVGKEFGAATNTFFKPPCVSVYRCGGCCNSEGLQCMNTSTGYLSKTLFEITVPLSQGPKPVTISFANHTSCRCMSKLDVYRQVHSIIRRSLPATLPQCQAANKTCPANYVWNNYMCQCLAQQDFIFYSNVEDDSSNGFHDVCGPNKELDEDTCQCVCKGGLRPSSCGPHKELDRDSCQCVCKNKLFLNSCGANREFDENTCQCVCKRTCPRNQPLNPGKCACECTENTQKCFLKGKKFHHQTCSCYRRPCTNRLKHCDPGLSFSEEVCRCVPSYWKRPHLN.

Residues 1-31 (MHLLCFLSLACSLLAAALIPGPREAPATVAA) form the signal peptide. Residues 32–107 (FESGLGFSEA…RTGDTVKLAA (76 aa)) constitute a propeptide that is removed on maturation. 3 disulfide bridges follow: C127–C169, C158–C205, and C162–C207. N171, N201, and N236 each carry an N-linked (GlcNAc...) asparagine glycan. A propeptide spanning residues 224-415 (SLPATLPQCQ…PSYWKRPHLN (192 aa)) is cleaved from the precursor. A run of 4 repeats spans residues 276 to 291 (CGPNKELDEDTCQCVC), 300 to 315 (CGPHKELDRDSCQCVC), 324 to 339 (CGANREFDENTCQCVC), and 343 to 358 (CPRNQPLNPGKCACEC). Residues 276 to 358 (CGPNKELDED…LNPGKCACEC (83 aa)) are 4 X 16 AA repeats of C-X(10)-C-X-C-X(1,3)-C.

This sequence belongs to the PDGF/VEGF growth factor family. Homodimer; non-covalent and antiparallel. Interacts with FLT4/VEGFR3; the interaction is required for FLT4/VEGFR3 homodimarization and activation. In terms of processing, undergoes a complex proteolytic maturation which generates a variety of processed secreted forms with increased activity toward VEGFR-3, but only the fully processed form could activate VEGFR-2. VEGF-C first form an antiparallel homodimer linked by disulfide bonds. Before secretion, a cleavage occurs between Arg-223 and Ser-224 producing a heterotetramer. The next extracellular step of the processing removes the N-terminal propeptide. Finally the mature VEGF-C is composed mostly of two VEGF homology domains (VHDs) bound by non-covalent interactions. Highly expressed in the lung, ovary, preputial gland and the adrenal gland. Expressed in the post-pubertal mammary glands.

The protein localises to the secreted. Functionally, growth factor active in angiogenesis, and endothelial cell growth, stimulating their proliferation and migration and also has effects on the permeability of blood vessels. May function in angiogenesis of the venous and lymphatic vascular systems during embryogenesis, and also in the maintenance of differentiated lymphatic endothelium in adults. Binds and activates KDR/VEGFR2 and FLT4/VEGFR3 receptors. The protein is Vascular endothelial growth factor C (Vegfc) of Rattus norvegicus (Rat).